A 21-amino-acid polypeptide reads, in one-letter code: MALNLQDKQAIVAEVSEVAKG.

The protein belongs to the universal ribosomal protein uL10 family. In terms of assembly, part of the ribosomal stalk of the 50S ribosomal subunit. The N-terminus interacts with L11 and the large rRNA to form the base of the stalk. The C-terminus forms an elongated spine to which L12 dimers bind in a sequential fashion forming a multimeric L10(L12)X complex.

Forms part of the ribosomal stalk, playing a central role in the interaction of the ribosome with GTP-bound translation factors. This Proteus vulgaris protein is Large ribosomal subunit protein uL10 (rplJ).